The following is a 144-amino-acid chain: Large ribosomal subunit protein uL13 (144 aa).

This sequence belongs to the universal ribosomal protein uL13 family. In terms of assembly, part of the 50S ribosomal subunit.

In terms of biological role, this protein is one of the early assembly proteins of the 50S ribosomal subunit, although it is not seen to bind rRNA by itself. It is important during the early stages of 50S assembly. This is Large ribosomal subunit protein uL13 from Nitrosomonas eutropha (strain DSM 101675 / C91 / Nm57).